Here is a 497-residue protein sequence, read N- to C-terminus: Transmembrane protein 200A (497 aa).

Over 1 to 61 (MIATGGVITG…RGKIRLYSAS (61 aa)) the chain is Cytoplasmic. Residues 20–30 (TRSQYHLSAQS) show a composition bias toward polar residues. The interval 20–44 (TRSQYHLSAQSPGPAPEKKTTKRKP) is disordered. A helical membrane pass occupies residues 62 to 82 (GFFLVLGVLILMAGIAMAVLG). Over 83 to 127 (YWPHKDQPKAPETKMSANNTQSFGREQAGSIAQFLEQHMHSEKMK) the chain is Extracellular. An N-linked (GlcNAc...) asparagine glycan is attached at N100. The chain crosses the membrane as a helical span at residues 128–148 (MLGPFTMGIGIFIFICANAIL). At 149–497 (HENRDRETKV…LKRGTSETRF (349 aa)) the chain is on the cytoplasmic side. Over residues 353 to 375 (SNSATESASSTSSRSSLSPGSTS) the composition is skewed to low complexity. Disordered stretches follow at residues 353–385 (SNSATESASSTSSRSSLSPGSTSGRFLSPGAAR) and 400–438 (HSKSLDLERGPTKLTVQPEQRKHPSWPRLDRSNSKGYTR). Over residues 427-438 (RLDRSNSKGYTR) the composition is skewed to basic and acidic residues.

It belongs to the TMEM200 family.

The protein resides in the membrane. The protein is Transmembrane protein 200A (tmem200a) of Danio rerio (Zebrafish).